The chain runs to 320 residues: Acetyl-coenzyme A carboxylase carboxyl transferase subunit beta (320 aa).

In terms of domain architecture, CoA carboxyltransferase N-terminal spans 25-294 (LWRKCPECGT…AIVGDLPAPD (270 aa)). Zn(2+) contacts are provided by C29, C32, C48, and C51. The segment at 29–51 (CPECGTMLFHRELSDNLFVCISC) adopts a C4-type zinc-finger fold. Residues 290–320 (LPAPDPAPATPEPQKAAPSAPAQDKPGAGRS) form a disordered region.

The protein belongs to the AccD/PCCB family. Acetyl-CoA carboxylase is a heterohexamer composed of biotin carboxyl carrier protein (AccB), biotin carboxylase (AccC) and two subunits each of ACCase subunit alpha (AccA) and ACCase subunit beta (AccD). Zn(2+) is required as a cofactor.

It localises to the cytoplasm. The catalysed reaction is N(6)-carboxybiotinyl-L-lysyl-[protein] + acetyl-CoA = N(6)-biotinyl-L-lysyl-[protein] + malonyl-CoA. Its pathway is lipid metabolism; malonyl-CoA biosynthesis; malonyl-CoA from acetyl-CoA: step 1/1. In terms of biological role, component of the acetyl coenzyme A carboxylase (ACC) complex. Biotin carboxylase (BC) catalyzes the carboxylation of biotin on its carrier protein (BCCP) and then the CO(2) group is transferred by the transcarboxylase to acetyl-CoA to form malonyl-CoA. The polypeptide is Acetyl-coenzyme A carboxylase carboxyl transferase subunit beta (Dinoroseobacter shibae (strain DSM 16493 / NCIMB 14021 / DFL 12)).